The chain runs to 250 residues: NADH-quinone oxidoreductase subunit B 2 (250 aa).

[4Fe-4S] cluster-binding residues include Cys-41, Cys-42, Cys-107, and Cys-137.

Belongs to the complex I 20 kDa subunit family. As to quaternary structure, NDH-1 is composed of 14 different subunits. Subunits NuoB, C, D, E, F, and G constitute the peripheral sector of the complex. It depends on [4Fe-4S] cluster as a cofactor.

It is found in the cell membrane. It catalyses the reaction a quinone + NADH + 5 H(+)(in) = a quinol + NAD(+) + 4 H(+)(out). Functionally, NDH-1 shuttles electrons from NADH, via FMN and iron-sulfur (Fe-S) centers, to quinones in the respiratory chain. The immediate electron acceptor for the enzyme in this species is believed to be ubiquinone. Couples the redox reaction to proton translocation (for every two electrons transferred, four hydrogen ions are translocated across the cytoplasmic membrane), and thus conserves the redox energy in a proton gradient. In Herpetosiphon aurantiacus (strain ATCC 23779 / DSM 785 / 114-95), this protein is NADH-quinone oxidoreductase subunit B 2.